A 294-amino-acid polypeptide reads, in one-letter code: ATP phosphoribosyltransferase (294 aa).

This sequence belongs to the ATP phosphoribosyltransferase family. Long subfamily. Requires Mg(2+) as cofactor.

The protein resides in the cytoplasm. The enzyme catalyses 1-(5-phospho-beta-D-ribosyl)-ATP + diphosphate = 5-phospho-alpha-D-ribose 1-diphosphate + ATP. It participates in amino-acid biosynthesis; L-histidine biosynthesis; L-histidine from 5-phospho-alpha-D-ribose 1-diphosphate: step 1/9. Feedback inhibited by histidine. Its function is as follows. Catalyzes the condensation of ATP and 5-phosphoribose 1-diphosphate to form N'-(5'-phosphoribosyl)-ATP (PR-ATP). Has a crucial role in the pathway because the rate of histidine biosynthesis seems to be controlled primarily by regulation of HisG enzymatic activity. This is ATP phosphoribosyltransferase from Chlorobaculum parvum (strain DSM 263 / NCIMB 8327) (Chlorobium vibrioforme subsp. thiosulfatophilum).